We begin with the raw amino-acid sequence, 593 residues long: Aspartate--tRNA(Asp/Asn) ligase (593 aa).

Glu173 is an L-aspartate binding site. Residues 197 to 200 (QLFK) are aspartate. An L-aspartate-binding site is contributed by Arg219. ATP is bound by residues 219 to 221 (RDE) and Gln228. His451 serves as a coordination point for L-aspartate. Residue Glu485 participates in ATP binding. Arg492 is a binding site for L-aspartate. ATP is bound at residue 537-540 (GIDR).

It belongs to the class-II aminoacyl-tRNA synthetase family. Type 1 subfamily. Homodimer.

Its subcellular location is the cytoplasm. It catalyses the reaction tRNA(Asx) + L-aspartate + ATP = L-aspartyl-tRNA(Asx) + AMP + diphosphate. Its function is as follows. Aspartyl-tRNA synthetase with relaxed tRNA specificity since it is able to aspartylate not only its cognate tRNA(Asp) but also tRNA(Asn). Reaction proceeds in two steps: L-aspartate is first activated by ATP to form Asp-AMP and then transferred to the acceptor end of tRNA(Asp/Asn). The sequence is that of Aspartate--tRNA(Asp/Asn) ligase from Legionella pneumophila (strain Paris).